The chain runs to 142 residues: Large ribosomal subunit protein uL13 (142 aa).

Belongs to the universal ribosomal protein uL13 family. Part of the 50S ribosomal subunit.

In terms of biological role, this protein is one of the early assembly proteins of the 50S ribosomal subunit, although it is not seen to bind rRNA by itself. It is important during the early stages of 50S assembly. This Citrobacter koseri (strain ATCC BAA-895 / CDC 4225-83 / SGSC4696) protein is Large ribosomal subunit protein uL13.